Consider the following 141-residue polypeptide: Nucleoside triphosphatase NudI (141 aa).

Residues 1–141 form the Nudix hydrolase domain; it reads MRQRTIVCPL…RKTLRLKGLL (141 aa). The Nudix box signature appears at 38–59; that stretch reads GGVESGERIEEALRREIREELG.

It belongs to the Nudix hydrolase family. NudI subfamily. In terms of assembly, monomer. It depends on Mg(2+) as a cofactor.

It catalyses the reaction a ribonucleoside 5'-triphosphate + H2O = a ribonucleoside 5'-phosphate + diphosphate + H(+). It carries out the reaction a 2'-deoxyribonucleoside 5'-triphosphate + H2O = a 2'-deoxyribonucleoside 5'-phosphate + diphosphate + H(+). The catalysed reaction is dUTP + H2O = dUMP + diphosphate + H(+). The enzyme catalyses dTTP + H2O = dTMP + diphosphate + H(+). It catalyses the reaction dCTP + H2O = dCMP + diphosphate + H(+). In terms of biological role, catalyzes the hydrolysis of nucleoside triphosphates, with a preference for pyrimidine deoxynucleoside triphosphates (dUTP, dTTP and dCTP). This is Nucleoside triphosphatase NudI from Shigella flexneri serotype 5b (strain 8401).